The chain runs to 278 residues: Undecaprenyl-diphosphatase (278 aa).

8 consecutive transmembrane segments (helical) span residues 2–22, 44–64, 85–105, 113–133, 150–170, 189–209, 223–243, and 253–273; these read ALVE…TEWL, AFME…VVLL, IEMW…GLLW, FYNY…FIVI, ITYT…IFPG, TVAA…ASAL, LMIL…SIKF, and FKIF…YFSA.

The protein belongs to the UppP family.

Its subcellular location is the cell membrane. The enzyme catalyses di-trans,octa-cis-undecaprenyl diphosphate + H2O = di-trans,octa-cis-undecaprenyl phosphate + phosphate + H(+). Its function is as follows. Catalyzes the dephosphorylation of undecaprenyl diphosphate (UPP). Confers resistance to bacitracin. In Desulfitobacterium hafniense (strain DSM 10664 / DCB-2), this protein is Undecaprenyl-diphosphatase.